The following is a 233-amino-acid chain: 7-cyano-7-deazaguanine synthase (233 aa).

7–17 contacts ATP; the sequence is LSGGLDSLVTS. 4 residues coordinate Zn(2+): cysteine 195, cysteine 206, cysteine 209, and cysteine 212.

The protein belongs to the QueC family. Zn(2+) is required as a cofactor.

The enzyme catalyses 7-carboxy-7-deazaguanine + NH4(+) + ATP = 7-cyano-7-deazaguanine + ADP + phosphate + H2O + H(+). Its pathway is purine metabolism; 7-cyano-7-deazaguanine biosynthesis. Its function is as follows. Catalyzes the ATP-dependent conversion of 7-carboxy-7-deazaguanine (CDG) to 7-cyano-7-deazaguanine (preQ(0)). This chain is 7-cyano-7-deazaguanine synthase, found in Methanococcus vannielii (strain ATCC 35089 / DSM 1224 / JCM 13029 / OCM 148 / SB).